Consider the following 96-residue polypeptide: Myticin-B (96 aa).

A signal peptide spans 1 to 20 (MKATMLLAVVVAVFVAGTEA). Positions 61-96 (VKFPFGATQDAKSMNELEYTPIMKSMENLDNGMDML) are cleaved as a propeptide — removed in mature form.

Contains four disulfide bonds. Hemocytes.

It localises to the secreted. Bacteriolytic activity against Gram-positive bacteria M.luteus, B.megaterium and A.viridans and Gram-negative bacteria E.coli D31. Possesses antifungal activity against F.oxysporum. This Mytilus galloprovincialis (Mediterranean mussel) protein is Myticin-B.